The sequence spans 605 residues: Alpha-fetoprotein (605 aa).

Residues 1 to 18 (MKWITPASLILLLHFAAS) form the signal peptide. 3 consecutive Albumin domains span residues 19–207 (KALH…SIAK), 208–398 (ELRE…EELQ), and 399–597 (KHIE…KLIS). 8 cysteine pairs are disulfide-bonded: C95-C110, C109-C120, C144-C189, C188-C197, C220-C266, C265-C273, C285-C299, and C298-C309. Phosphoserine occurs at positions 107, 111, and 113. N247 carries N-linked (GlcNAc...) asparagine glycosylation. S340 is modified (phosphoserine). 7 disulfide bridges follow: C380/C389, C412/C458, C457/C468, C481/C497, C496/C507, C534/C579, and C578/C587. A Phosphoserine modification is found at S440. The N-linked (GlcNAc...) asparagine glycan is linked to N498.

It belongs to the ALB/AFP/VDB family. In terms of processing, glycosylated; contains two glycans. Sulfated. Plasma.

The protein localises to the secreted. Its function is as follows. Binds estrogens, fatty acids and metals. This chain is Alpha-fetoprotein (Afp), found in Mus musculus (Mouse).